We begin with the raw amino-acid sequence, 355 residues long: Fructose-1,6-bisphosphatase class 1 (355 aa).

Mg(2+) contacts are provided by Glu90, Asp109, Leu111, and Asp112. Residues 112–115 (DGSS), Asn204, and 256–258 (YLY) each bind substrate. Position 276 (Glu276) interacts with Mg(2+).

It belongs to the FBPase class 1 family. As to quaternary structure, homotetramer. Requires Mg(2+) as cofactor.

It localises to the cytoplasm. The catalysed reaction is beta-D-fructose 1,6-bisphosphate + H2O = beta-D-fructose 6-phosphate + phosphate. It functions in the pathway carbohydrate biosynthesis; gluconeogenesis. The polypeptide is Fructose-1,6-bisphosphatase class 1 (Acidiphilium cryptum (strain JF-5)).